The primary structure comprises 159 residues: Ribosome maturation factor RimP (159 aa).

It belongs to the RimP family.

It localises to the cytoplasm. Functionally, required for maturation of 30S ribosomal subunits. The sequence is that of Ribosome maturation factor RimP from Geotalea daltonii (strain DSM 22248 / JCM 15807 / FRC-32) (Geobacter daltonii).